Consider the following 383-residue polypeptide: Aquaporin-5 (383 aa).

The Cytoplasmic portion of the chain corresponds to Met1–His46. A helical membrane pass occupies residues Val47–Ala67. The Extracellular segment spans residues Ala68–Thr93. Residues Gln94–Phe114 form a helical membrane-spanning segment. Residue Arg115 is a topological domain, cytoplasmic. The helical transmembrane segment at Ile116 to Asp136 threads the bilayer. The NPA 1 signature appears at Asp122–Ala124. At Leu137–Cys140 the chain is on the extracellular side. The helical transmembrane segment at Val141–Leu161 threads the bilayer. Topologically, residues Tyr162–Gln180 are cytoplasmic. A helical transmembrane segment spans residues Gly181–Ala201. Topologically, residues Glu202–Thr207 are extracellular. Residues Phe208 to Trp228 traverse the membrane as a helical segment. Over Thr229–His252 the chain is Cytoplasmic. The short motif at Asn234–Ala236 is the NPA 2 element. Residues Trp253–Ile273 traverse the membrane as a helical segment. Over Lys274 to Asp383 the chain is Extracellular. The span at Ala332–Ser349 shows a compositional bias: polar residues. The segment at Ala332–Asp383 is disordered. Basic and acidic residues predominate over residues Glu350 to Ala362. Residues Lys363 to Ala372 show a composition bias toward low complexity.

This sequence belongs to the MIP/aquaporin (TC 1.A.8) family.

The protein localises to the membrane. The enzyme catalyses H2O(in) = H2O(out). In terms of biological role, water channel required to facilitate the transport of water across membranes. May play a role in the vegetative growth. This Botryotinia fuckeliana (strain B05.10) (Noble rot fungus) protein is Aquaporin-5.